The primary structure comprises 342 residues: Foldase protein PrsA (342 aa).

Residues 1–22 (MVSVKKIVASALVGVLMFSAVG) form the signal peptide. Cys23 carries N-palmitoyl cysteine lipidation. Cys23 is lipidated: S-diacylglycerol cysteine. The PpiC domain occupies 190-284 (AKGVLARHLL…FGYHIIQAGA (95 aa)).

Belongs to the PrsA family.

The protein resides in the cell membrane. It catalyses the reaction [protein]-peptidylproline (omega=180) = [protein]-peptidylproline (omega=0). Functionally, plays a major role in protein secretion by helping the post-translocational extracellular folding of several secreted proteins. This Clostridium perfringens (strain SM101 / Type A) protein is Foldase protein PrsA.